The following is a 132-amino-acid chain: MKDPRWIMEGEAMAGLVKLRRLSDKSYLGLSGYRYKTHIQVYVLTKIFEITQYPSHDTRQNLAILLNMSPRTIQIWFQNSRSVSRGAAKKKVSKDNGPQEAPKAKIVSNLTVPVKYITWLILSYPSYSQIGN.

Residues 29-88 constitute a DNA-binding region (homeobox); the sequence is GLSGYRYKTHIQVYVLTKIFEITQYPSHDTRQNLAILLNMSPRTIQIWFQNSRSVSRGAA. Residues 82–101 are disordered; it reads SVSRGAAKKKVSKDNGPQEA.

It localises to the nucleus. The chain is Homeobox protein HD-4 (HD-4) from Encephalitozoon cuniculi (strain GB-M1) (Microsporidian parasite).